Reading from the N-terminus, the 164-residue chain is Putative glutamine amidotransferase-like protein RP713 (164 aa).

One can recognise a Glutamine amidotransferase type-1 domain in the interval 39 to 164; that stretch reads TIANPNSLFM…VITVKIIIYM (126 aa).

This Rickettsia prowazekii (strain Madrid E) protein is Putative glutamine amidotransferase-like protein RP713.